The chain runs to 102 residues: Protein V2 (102 aa).

Its function is as follows. May be involved in the regulation of ssDNA versus dsDNA levels. The polypeptide is Protein V2 (Beet curly top virus (strain California/Logan) (BCTV)).